The following is a 68-amino-acid chain: Large ribosomal subunit protein uL30 (68 aa).

Belongs to the universal ribosomal protein uL30 family. Part of the 50S ribosomal subunit.

The sequence is that of Large ribosomal subunit protein uL30 from Bartonella quintana (strain Toulouse) (Rochalimaea quintana).